The following is a 165-amino-acid chain: Nucleotide-binding protein PMM0481 (165 aa).

This sequence belongs to the YajQ family.

Functionally, nucleotide-binding protein. The chain is Nucleotide-binding protein PMM0481 from Prochlorococcus marinus subsp. pastoris (strain CCMP1986 / NIES-2087 / MED4).